The chain runs to 471 residues: UDP-N-acetylmuramate--L-alanine ligase (471 aa).

ATP is bound at residue 114 to 120 (GTHGKTT).

It belongs to the MurCDEF family.

It is found in the cytoplasm. It catalyses the reaction UDP-N-acetyl-alpha-D-muramate + L-alanine + ATP = UDP-N-acetyl-alpha-D-muramoyl-L-alanine + ADP + phosphate + H(+). It participates in cell wall biogenesis; peptidoglycan biosynthesis. Cell wall formation. In Allorhizobium ampelinum (strain ATCC BAA-846 / DSM 112012 / S4) (Agrobacterium vitis (strain S4)), this protein is UDP-N-acetylmuramate--L-alanine ligase.